The sequence spans 124 residues: Large ribosomal subunit protein bL12 (124 aa).

Belongs to the bacterial ribosomal protein bL12 family. Homodimer. Part of the ribosomal stalk of the 50S ribosomal subunit. Forms a multimeric L10(L12)X complex, where L10 forms an elongated spine to which 2 to 4 L12 dimers bind in a sequential fashion. Binds GTP-bound translation factors.

Its function is as follows. Forms part of the ribosomal stalk which helps the ribosome interact with GTP-bound translation factors. Is thus essential for accurate translation. The protein is Large ribosomal subunit protein bL12 of Cupriavidus necator (strain ATCC 17699 / DSM 428 / KCTC 22496 / NCIMB 10442 / H16 / Stanier 337) (Ralstonia eutropha).